The sequence spans 195 residues: Glutathione S-transferase class-mu 26 kDa isozyme (195 aa).

One can recognise a GST N-terminal domain in the interval 1–83; the sequence is MAPKLGYWKI…YIADKHNMLG (83 aa). Glutathione contacts are provided by residues 7–8, 41–45, 54–55, and 67–68; these read YW, WRNEK, NL, and QS. The GST C-terminal domain maps to 85 to 195; it reads CPKERAEISM…TFGGGDAPPK (111 aa). Tyr-111 is a binding site for substrate.

Belongs to the GST superfamily. Mu family. As to quaternary structure, homodimer.

The catalysed reaction is RX + glutathione = an S-substituted glutathione + a halide anion + H(+). Functionally, conjugation of reduced glutathione to a wide number of exogenous and endogenous hydrophobic electrophiles. Its function is as follows. GST isoenzymes appear to play a central role in the parasite detoxification system. Other functions are also suspected including a role in increasing the solubility of haematin in the parasite gut. This is Glutathione S-transferase class-mu 26 kDa isozyme from Schistosoma mansoni (Blood fluke).